A 55-amino-acid polypeptide reads, in one-letter code: Omega-ctenitoxin-Pr2a (55 aa).

Cystine bridges form between Cys-2–Cys-16, Cys-9–Cys-22, Cys-15–Cys-37, Cys-24–Cys-35, and Cys-45–Cys-52.

In terms of tissue distribution, expressed by the venom gland.

The protein resides in the secreted. Its function is as follows. Antagonist of L-type calcium channels (Cav1/CACNA1). In vivo, causes paralysis in posterior limbs, and gradual decrease in movement and aggression during 24 hours after intracerebroventricular injection in mice at dose levels of 3 ug per mouse. The chain is Omega-ctenitoxin-Pr2a from Phoneutria reidyi (Brazilian Amazonian armed spider).